We begin with the raw amino-acid sequence, 973 residues long: EF-hand calcium-binding domain-containing protein 13 (973 aa).

Residues 384–448 are disordered; the sequence is YSKNGINFKK…HSSLQKQVSS (65 aa). Over residues 396-405 the composition is skewed to basic and acidic residues; the sequence is EKGEIHDSKS. The segment covering 406 to 418 has biased composition (low complexity); it reads KPQSLKSSTSLSK. EF-hand domains follow at residues 488–523, 524–559, 633–668, 756–791, 792–827, and 864–899; these read LLDEEFQKIVTDTSRNENGMVELDDFVNALAKERSF, PECNALPGVIKAIDKIKDKNVDYEDLNTCLQNFGIY, LKKDEFLAALELVTVDEGDKVQFEEFAKVVRNMRDA, PKVNEIKEAANILSHVDNGKIGIPDLEHALKCLNVN, LTEEDFNEALNCCNVSDNMEVDLKDFLMKMKESPHF, and TANAILTVMLRHVPEHESGKVSIQEFMTKLSDILTI.

This is EF-hand calcium-binding domain-containing protein 13 (EFCAB13) from Homo sapiens (Human).